A 231-amino-acid polypeptide reads, in one-letter code: Large ribosomal subunit protein uL1 (231 aa).

Belongs to the universal ribosomal protein uL1 family. Part of the 50S ribosomal subunit.

Binds directly to 23S rRNA. The L1 stalk is quite mobile in the ribosome, and is involved in E site tRNA release. Its function is as follows. Protein L1 is also a translational repressor protein, it controls the translation of the L11 operon by binding to its mRNA. The protein is Large ribosomal subunit protein uL1 of Agrobacterium fabrum (strain C58 / ATCC 33970) (Agrobacterium tumefaciens (strain C58)).